The primary structure comprises 253 residues: Triosephosphate isomerase (253 aa).

9 to 11 (NWK) serves as a coordination point for substrate. Histidine 95 acts as the Electrophile in catalysis. Glutamate 167 serves as the catalytic Proton acceptor. Residues glycine 173, serine 213, and 234 to 235 (GG) each bind substrate. The residue at position 213 (serine 213) is a Phosphoserine.

It belongs to the triosephosphate isomerase family. As to quaternary structure, homodimer.

It is found in the cytoplasm. The enzyme catalyses D-glyceraldehyde 3-phosphate = dihydroxyacetone phosphate. Its pathway is carbohydrate biosynthesis; gluconeogenesis. It participates in carbohydrate degradation; glycolysis; D-glyceraldehyde 3-phosphate from glycerone phosphate: step 1/1. Its function is as follows. Involved in the gluconeogenesis. Catalyzes stereospecifically the conversion of dihydroxyacetone phosphate (DHAP) to D-glyceraldehyde-3-phosphate (G3P). The polypeptide is Triosephosphate isomerase (Geobacillus kaustophilus (strain HTA426)).